Consider the following 485-residue polypeptide: Ribulose bisphosphate carboxylase large chain 2 (485 aa).

Substrate-binding residues include asparagine 124 and threonine 174. The active-site Proton acceptor is the lysine 176. Lysine 178 provides a ligand contact to substrate. Residues lysine 202, aspartate 204, and glutamate 205 each contribute to the Mg(2+) site. Lysine 202 carries the post-translational modification N6-carboxylysine. Histidine 294 (proton acceptor) is an active-site residue. Residues arginine 295, histidine 327, and serine 379 each contribute to the substrate site.

Belongs to the RuBisCO large chain family. Type I subfamily. As to quaternary structure, heterohexadecamer of 8 large chains and 8 small chains. The cofactor is Mg(2+).

It catalyses the reaction 2 (2R)-3-phosphoglycerate + 2 H(+) = D-ribulose 1,5-bisphosphate + CO2 + H2O. It carries out the reaction D-ribulose 1,5-bisphosphate + O2 = 2-phosphoglycolate + (2R)-3-phosphoglycerate + 2 H(+). In terms of biological role, ruBisCO catalyzes two reactions: the carboxylation of D-ribulose 1,5-bisphosphate, the primary event in carbon dioxide fixation, as well as the oxidative fragmentation of the pentose substrate. Both reactions occur simultaneously and in competition at the same active site. The polypeptide is Ribulose bisphosphate carboxylase large chain 2 (Rhodopseudomonas palustris (strain BisB5)).